The chain runs to 662 residues: Glutathione hydrolase 7 (662 aa).

The Cytoplasmic portion of the chain corresponds to 1-106; sequence MAAENEASQE…AAECSCRQDG (106 aa). A phosphoserine mark is found at Ser17, Ser72, Ser79, and Ser83. The disordered stretch occupies residues 26 to 90; the sequence is SFPRLPEDEP…DGSPLRETRK (65 aa). Over residues 72–83 the composition is skewed to low complexity; it reads SSSSEMGSQDGS. The helical; Signal-anchor for type II membrane protein transmembrane segment at 107–127 threads the bilayer; it reads LTVIVTACLTFATGVTVALVM. Residues 128–662 are Extracellular-facing; sequence QIYFGDPQIF…SLDATGASIL (535 aa). N-linked (GlcNAc...) asparagine glycosylation is found at Asn198, Asn267, Asn283, Asn330, Asn353, Asn394, Asn519, Asn523, and Asn586.

Belongs to the gamma-glutamyltransferase family. In terms of assembly, heterodimer composed of the light and heavy chains. The active site is located in the light chain. Post-translationally, cleaved by autocatalysis into a large and a small subunit and the autocatalytic cleavage is essential to the functional activation of the enzyme.

The protein localises to the membrane. The catalysed reaction is an N-terminal (5-L-glutamyl)-[peptide] + an alpha-amino acid = 5-L-glutamyl amino acid + an N-terminal L-alpha-aminoacyl-[peptide]. The enzyme catalyses glutathione + H2O = L-cysteinylglycine + L-glutamate. It carries out the reaction an S-substituted glutathione + H2O = an S-substituted L-cysteinylglycine + L-glutamate. It participates in sulfur metabolism; glutathione metabolism. Hydrolyzes and transfers gamma-glutamyl moieties from glutathione and other gamma-glutamyl compounds to acceptors. The polypeptide is Glutathione hydrolase 7 (Rattus norvegicus (Rat)).